We begin with the raw amino-acid sequence, 358 residues long: Aromatic amino acid aminotransferase (358 aa).

At Lys-214 the chain carries N6-(pyridoxal phosphate)lysine.

The protein belongs to the class-II pyridoxal-phosphate-dependent aminotransferase family. Homodimer. The cofactor is pyridoxal 5'-phosphate.

The enzyme catalyses an aromatic L-alpha-amino acid + 2-oxoglutarate = an aromatic oxo-acid + L-glutamate. In terms of biological role, aminotransferase that catalyzes the conversion of aromatic amino acids and 2-oxoglutarate into corresponding aromatic oxo acids and L-glutamate. This Rhodococcus erythropolis (strain PR4 / NBRC 100887) protein is Aromatic amino acid aminotransferase.